The primary structure comprises 332 residues: Large ribosomal subunit protein mL44 (332 aa).

The transit peptide at 1–30 (MASGLVRLLQQGHRCLLAPVAPKLVPPVRG) directs the protein to the mitochondrion. Residues 86 to 228 (DLLKTAFVNS…LITQMTGKEL (143 aa)) enclose the RNase III domain. One can recognise a DRBM domain in the interval 236–306 (NPMGLLVEEL…ARVALRKLYG (71 aa)).

Belongs to the ribonuclease III family. Mitochondrion-specific ribosomal protein mL44 subfamily. As to quaternary structure, component of the mitochondrial large ribosomal subunit (mt-LSU). Mature mammalian 55S mitochondrial ribosomes consist of a small (28S) and a large (39S) subunit. The 28S small subunit contains a 12S ribosomal RNA (12S mt-rRNA) and 30 different proteins. The 39S large subunit contains a 16S rRNA (16S mt-rRNA), a copy of mitochondrial valine transfer RNA (mt-tRNA(Val)), which plays an integral structural role, and 52 different proteins.

It is found in the mitochondrion. Its function is as follows. Component of the 39S subunit of mitochondrial ribosome. May have a function in the assembly/stability of nascent mitochondrial polypeptides exiting the ribosome. The chain is Large ribosomal subunit protein mL44 (MRPL44) from Homo sapiens (Human).